We begin with the raw amino-acid sequence, 552 residues long: WAP, Kazal, immunoglobulin, Kunitz and NTR domain-containing protein 1 (552 aa).

The N-terminal stretch at 1 to 25 (MPAPQPLLPLLFAFVLIHLTSETNL) is a signal peptide. In terms of domain architecture, WAP spans 29-82 (PGSHPGMCPNQLSPHLWVDAQSTCERECTRDQDCAASEKCCTNVCGLQSCVAAR). Intrachain disulfides connect Cys36–Cys69, Cys52–Cys73, Cys56–Cys68, Cys62–Cys78, Cys120–Cys150, Cys124–Cys143, Cys132–Cys161, Cys211–Cys267, Cys303–Cys355, Cys310–Cys338, Cys330–Cys351, Cys363–Cys413, Cys372–Cys396, Cys388–Cys409, Cys421–Cys493, Cys424–Cys495, and Cys435–Cys544. Positions 112–163 (WDGQPVCRCRDRCEKEPSFTCASDGLTYYNRCYMDAEACLRGLHLHVVPCKH) constitute a Kazal-like domain. Positions 190-283 (PALYNSPSPQ…GLLRADFPLS (94 aa)) constitute an Ig-like C2-type domain. BPTI/Kunitz inhibitor domains lie at 289–355 (TTQD…QQAC) and 363–413 (CALP…EDAC). Residues 413–544 (CPVPRTPPCR…IVELLEKKAC (132 aa)) form the NTR domain. N-linked (GlcNAc...) asparagine glycosylation occurs at Asn497.

This sequence belongs to the WFIKKN family. As to expression, preferentially expressed in the developing inner ear and the dorsal neural tube.

The protein localises to the secreted. In terms of biological role, protease-inhibitor that contains multiple distinct protease inhibitor domains. Probably has serine protease- and metalloprotease-inhibitor activity. This is WAP, Kazal, immunoglobulin, Kunitz and NTR domain-containing protein 1 (Wfikkn1) from Rattus norvegicus (Rat).